Here is a 286-residue protein sequence, read N- to C-terminus: Expansin-like protein 1 (286 aa).

An N-terminal signal peptide occupies residues 1 to 21; the sequence is MKTFVLFVILLCLTFLSISKS. Residues 22–265 are Extracellular-facing; sequence ETCPFSQSLV…TGASIGTPSD (244 aa). The Expansin-like EG45 domain occupies 44–145; it reads AGNCGYENLM…YKVPCGVNGN (102 aa). 2 disulfide bridges follow: cysteine 47/cysteine 77 and cysteine 80/cysteine 140. 2 N-linked (GlcNAc...) asparagine glycosylation sites follow: asparagine 82 and asparagine 89. The helical transmembrane segment at 266–286 threads the bilayer; sequence ASSLTLYALFSLTILFLVMLN.

Belongs to the expansin family. Expansin A subfamily.

It localises to the membrane. In terms of biological role, may serve to lubricate the movement of the cellulose microfibrils during cell growth and wall extension and/or they may serve to maintain the fluid state of the slug cell wall. The polypeptide is Expansin-like protein 1 (expl1) (Dictyostelium discoideum (Social amoeba)).